Reading from the N-terminus, the 487-residue chain is Malonate-semialdehyde dehydrogenase 2 (487 aa).

The NAD(+) site is built by F154, K178, E181, R182, and S231. Catalysis depends on C286, which acts as the Nucleophile. E386 contacts NAD(+).

Belongs to the aldehyde dehydrogenase family. IolA subfamily. As to quaternary structure, homotetramer.

It carries out the reaction 3-oxopropanoate + NAD(+) + CoA + H2O = hydrogencarbonate + acetyl-CoA + NADH + H(+). It catalyses the reaction 2-methyl-3-oxopropanoate + NAD(+) + CoA + H2O = propanoyl-CoA + hydrogencarbonate + NADH + H(+). The protein operates within polyol metabolism; myo-inositol degradation into acetyl-CoA; acetyl-CoA from myo-inositol: step 7/7. Catalyzes the oxidation of malonate semialdehyde (MSA) and methylmalonate semialdehyde (MMSA) into acetyl-CoA and propanoyl-CoA, respectively. Is involved in a myo-inositol catabolic pathway. Bicarbonate, and not CO2, is the end-product of the enzymatic reaction. In Bacillus thuringiensis (strain Al Hakam), this protein is Malonate-semialdehyde dehydrogenase 2.